The chain runs to 291 residues: Ribosomal RNA small subunit methyltransferase A (291 aa).

Residues His-37, Leu-39, Gly-64, Glu-85, Asp-110, and Asn-131 each coordinate S-adenosyl-L-methionine.

The protein belongs to the class I-like SAM-binding methyltransferase superfamily. rRNA adenine N(6)-methyltransferase family. RsmA subfamily.

It localises to the cytoplasm. It catalyses the reaction adenosine(1518)/adenosine(1519) in 16S rRNA + 4 S-adenosyl-L-methionine = N(6)-dimethyladenosine(1518)/N(6)-dimethyladenosine(1519) in 16S rRNA + 4 S-adenosyl-L-homocysteine + 4 H(+). Specifically dimethylates two adjacent adenosines (A1518 and A1519) in the loop of a conserved hairpin near the 3'-end of 16S rRNA in the 30S particle. May play a critical role in biogenesis of 30S subunits. This Dehalococcoides mccartyi (strain ATCC BAA-2266 / KCTC 15142 / 195) (Dehalococcoides ethenogenes (strain 195)) protein is Ribosomal RNA small subunit methyltransferase A.